Consider the following 214-residue polypeptide: UPF0502 protein Pput_3252 (214 aa).

This sequence belongs to the UPF0502 family.

The protein is UPF0502 protein Pput_3252 of Pseudomonas putida (strain ATCC 700007 / DSM 6899 / JCM 31910 / BCRC 17059 / LMG 24140 / F1).